The sequence spans 174 residues: 3-hydroxydecanoyl-[acyl-carrier-protein] dehydratase (174 aa).

Residue His71 is part of the active site.

Belongs to the thioester dehydratase family. FabA subfamily. As to quaternary structure, homodimer.

It is found in the cytoplasm. The enzyme catalyses a (3R)-hydroxyacyl-[ACP] = a (2E)-enoyl-[ACP] + H2O. It carries out the reaction (3R)-hydroxydecanoyl-[ACP] = (2E)-decenoyl-[ACP] + H2O. The catalysed reaction is (2E)-decenoyl-[ACP] = (3Z)-decenoyl-[ACP]. It participates in lipid metabolism; fatty acid biosynthesis. In terms of biological role, necessary for the introduction of cis unsaturation into fatty acids. Catalyzes the dehydration of (3R)-3-hydroxydecanoyl-ACP to E-(2)-decenoyl-ACP and then its isomerization to Z-(3)-decenoyl-ACP. Can catalyze the dehydratase reaction for beta-hydroxyacyl-ACPs with saturated chain lengths up to 16:0, being most active on intermediate chain length. In Nitrobacter hamburgensis (strain DSM 10229 / NCIMB 13809 / X14), this protein is 3-hydroxydecanoyl-[acyl-carrier-protein] dehydratase.